The chain runs to 482 residues: Zinc finger protein 223 (482 aa).

Residues 8 to 78 form the KRAB domain; the sequence is VTFKDVAVVF…DIATQREGNS (71 aa). C2H2-type zinc fingers lie at residues 176-198, 204-226, 232-254, 260-282, and 288-310; these read HSCDECGKSFCYISALHIHQRVH, FKCDVCGKEFSQSLHLQTHQRVH, FKCEQCGRGFRCRSALTVHCKLH, YNCEACGRAFIHDFQLQKHQRIH, and FKCEICSVSFRLRSSLNRHCVVH. The C2H2-type 6; degenerate zinc finger occupies 316-338; the sequence is NSTGEYGKGFIRRLDLCKHQTIH. 3 C2H2-type zinc fingers span residues 344 to 366, 372 to 394, and 400 to 422; these read YNCKECGKSFRRSSYLLIHQRVH, YKCDKCGKSYITKSGLDLHHRAH, and YNCDDCGKSFRQASSILNHKRLH. A C2H2-type 10; degenerate zinc finger spans residues 428 to 450; it reads FKCEDCGKKLVYRSYRKDQQKNH.

Belongs to the krueppel C2H2-type zinc-finger protein family.

Its subcellular location is the nucleus. Its function is as follows. May be involved in transcriptional regulation. The polypeptide is Zinc finger protein 223 (ZNF223) (Homo sapiens (Human)).